A 200-amino-acid chain; its full sequence is uncharacterized protein (200 aa).

Disordered regions lie at residues 1–27 (MTDT…EAET), 42–79 (IPKE…STNA), and 169–200 (HGRA…EHGR). Basic and acidic residues predominate over residues 187 to 200 (RQMEKTGAGREHGR).

This is an uncharacterized protein from Shigella flexneri.